We begin with the raw amino-acid sequence, 163 residues long: Photosystem II extrinsic protein V (163 aa).

Residues 1 to 26 form the signal peptide; it reads MFKKSYQFFALVLFSIFNVLVTSASA. Heme c-binding residues include Cys-63, Cys-66, His-67, and His-118.

This sequence belongs to the cytochrome c family. PsbV subfamily. As to quaternary structure, PSII is composed of 1 copy each of membrane proteins PsbA, PsbB, PsbC, PsbD, PsbE, PsbF, PsbH, PsbI, PsbJ, PsbK, PsbL, PsbM, PsbT, PsbY, PsbZ, Psb30/Ycf12, at least 3 peripheral proteins of the oxygen-evolving complex and a large number of cofactors. It forms dimeric complexes. The cofactor is heme c.

Its subcellular location is the plastid. It localises to the chloroplast thylakoid membrane. One of the extrinsic, lumenal subunits of photosystem II (PSII). PSII is a light-driven water plastoquinone oxidoreductase, using light energy to abstract electrons from H(2)O, generating a proton gradient subsequently used for ATP formation. The extrinsic proteins stabilize the structure of photosystem II oxygen-evolving complex (OEC), the ion environment of oxygen evolution and protect the OEC against heat-induced inactivation. The polypeptide is Photosystem II extrinsic protein V (Trieres chinensis (Marine centric diatom)).